The chain runs to 340 residues: HTH-type transcriptional regulator VirS (340 aa).

Residues 236 to 334 (ERVVGLARRL…GMTPRQYRAY (99 aa)) enclose the HTH araC/xylS-type domain. 2 consecutive DNA-binding regions (H-T-H motif) follow at residues 254–275 (EAIADQLDMHPRTLQRRLAAEG) and 301–324 (LSQIAVLLGYSEQSALNRSCRRWF).

Post-translationally, phosphorylated by PknK. Phosphorylation increases affinity for the mymA promoter.

In terms of biological role, regulates the expression of the mymA operon. The protein is HTH-type transcriptional regulator VirS (virS) of Mycobacterium tuberculosis (strain CDC 1551 / Oshkosh).